The sequence spans 111 residues: HTH-type transcriptional regulator SinR (111 aa).

The HTH cro/C1-type domain maps to 6–61 (IKQYRKEKGYSLSELAEKAGVAKSYLSSIERNLQTNPSIQFLEKVSAVLDVSVHTL). A DNA-binding region (H-T-H motif) is located at residues 17–36 (LSELAEKAGVAKSYLSSIER). The Sin domain maps to 65–103 (KHETEYDGQLDSEWEKLVRDAMTSGVSKKQFREFLDYQK).

In terms of assembly, homotetramer in the absence of SinI. Heterodimer with SinI. Interaction with SinI disrupts the SinR tetramer and its repressor activity. Interacts with hpr.

In terms of biological role, negative as well as positive regulator of alternate developmental processes that are induced at the end of vegetative growth in response to nutrient depletion. Binds to the alkaline protease (aprE) gene at two sites. Also acts as a repressor of the key sporulation gene spo0A. Negatively regulates transcription of the eps operon, which is responsible for the biosynthesis of an exopolysaccharide involved in biofilm formation; therefore it could govern the transition between a state in which bacteria swim or swarm and a state in which bacteria assemble into multicellular communities. Acts with Hpr as a corepressor of epr expression. Also negatively regulates transcription of the lutABC operon, which is required for lactate utilization. Repressor activity is regulated by SinI. The polypeptide is HTH-type transcriptional regulator SinR (sinR) (Bacillus subtilis (strain 168)).